Consider the following 362-residue polypeptide: Heat-inducible transcription repressor HrcA (362 aa).

The protein belongs to the HrcA family.

In terms of biological role, negative regulator of class I heat shock genes (grpE-dnaK-dnaJ and groELS operons). Prevents heat-shock induction of these operons. This is Heat-inducible transcription repressor HrcA from Rhizobium leguminosarum bv. trifolii (strain WSM2304).